A 346-amino-acid chain; its full sequence is Ketol-acid reductoisomerase (NADP(+)) (346 aa).

The KARI N-terminal Rossmann domain occupies 1–189; that stretch reads MQVYYDRDAD…GGGRSGIIET (189 aa). NADP(+) is bound by residues 24–27, arginine 48, serine 51, threonine 53, and 83–86; these read YGSQ and DEHQ. Residue histidine 108 is part of the active site. NADP(+) is bound at residue glycine 134. Residues 190–335 enclose the KARI C-terminal knotted domain; that stretch reads TFKEECETDL…EKLRAMMPWI (146 aa). Residues aspartate 198, glutamate 202, glutamate 234, and glutamate 238 each contribute to the Mg(2+) site. Serine 259 provides a ligand contact to substrate.

It belongs to the ketol-acid reductoisomerase family. It depends on Mg(2+) as a cofactor.

It carries out the reaction (2R)-2,3-dihydroxy-3-methylbutanoate + NADP(+) = (2S)-2-acetolactate + NADPH + H(+). It catalyses the reaction (2R,3R)-2,3-dihydroxy-3-methylpentanoate + NADP(+) = (S)-2-ethyl-2-hydroxy-3-oxobutanoate + NADPH + H(+). It participates in amino-acid biosynthesis; L-isoleucine biosynthesis; L-isoleucine from 2-oxobutanoate: step 2/4. Its pathway is amino-acid biosynthesis; L-valine biosynthesis; L-valine from pyruvate: step 2/4. Its function is as follows. Involved in the biosynthesis of branched-chain amino acids (BCAA). Catalyzes an alkyl-migration followed by a ketol-acid reduction of (S)-2-acetolactate (S2AL) to yield (R)-2,3-dihydroxy-isovalerate. In the isomerase reaction, S2AL is rearranged via a Mg-dependent methyl migration to produce 3-hydroxy-3-methyl-2-ketobutyrate (HMKB). In the reductase reaction, this 2-ketoacid undergoes a metal-dependent reduction by NADPH to yield (R)-2,3-dihydroxy-isovalerate. This chain is Ketol-acid reductoisomerase (NADP(+)), found in Sphingopyxis alaskensis (strain DSM 13593 / LMG 18877 / RB2256) (Sphingomonas alaskensis).